We begin with the raw amino-acid sequence, 476 residues long: Ribosomal RNA small subunit methyltransferase F (476 aa).

S-adenosyl-L-methionine-binding positions include 124-130 (ASAPGSK), Glu-148, Asp-175, and Asp-193. Residue Cys-246 is the Nucleophile of the active site.

The protein belongs to the class I-like SAM-binding methyltransferase superfamily. RsmB/NOP family.

The protein resides in the cytoplasm. The enzyme catalyses cytidine(1407) in 16S rRNA + S-adenosyl-L-methionine = 5-methylcytidine(1407) in 16S rRNA + S-adenosyl-L-homocysteine + H(+). Specifically methylates the cytosine at position 1407 (m5C1407) of 16S rRNA. The protein is Ribosomal RNA small subunit methyltransferase F of Photobacterium profundum (strain SS9).